Consider the following 64-residue polypeptide: Large ribosomal subunit protein bL33 (64 aa).

This sequence belongs to the bacterial ribosomal protein bL33 family.

The sequence is that of Large ribosomal subunit protein bL33 from Picosynechococcus sp. (strain ATCC 27264 / PCC 7002 / PR-6) (Agmenellum quadruplicatum).